The chain runs to 278 residues: Tyrosine-protein phosphatase pmp1 (278 aa).

One can recognise a Tyrosine-protein phosphatase domain in the interval 60 to 214 (GPVCIYPPNI…LSEYQQIIRK (155 aa)). Cys158 serves as the catalytic Phosphocysteine intermediate. Residues 217–278 (SQGPYQSSSL…SSGSISNDAS (62 aa)) form a disordered region. The span at 252–278 (SPSTSESSMFTNLRRTRSSGSISNDAS) shows a compositional bias: polar residues.

Belongs to the protein-tyrosine phosphatase family. Non-receptor class dual specificity subfamily.

The enzyme catalyses O-phospho-L-tyrosyl-[protein] + H2O = L-tyrosyl-[protein] + phosphate. Its function is as follows. Dual specificity phosphatase that dephosphorylates MAP kinase pmk1 on a Tyr. Has a role in chloride ion homeostasis by inactivating this pmk1 MAP kinase pathway. The protein is Tyrosine-protein phosphatase pmp1 (pmp1) of Schizosaccharomyces pombe (strain 972 / ATCC 24843) (Fission yeast).